A 246-amino-acid polypeptide reads, in one-letter code: Polyhedrin (246 aa).

The protein belongs to the polyhedrin family.

Functionally, major component of the virus occlusion bodies, which are large proteinaceous structures (polyhedra), that protect the virus from the outside environment for extended periods until they are ingested by insect larvae. In Mamestra brassicae nuclear polyhedrosis virus (MbNPV), this protein is Polyhedrin (PH).